A 443-amino-acid chain; its full sequence is Trigger factor (443 aa).

The PPIase FKBP-type domain maps to 161–246 (GDKVVIDFQG…IKKIMEGKLP (86 aa)).

This sequence belongs to the FKBP-type PPIase family. Tig subfamily.

It localises to the cytoplasm. It catalyses the reaction [protein]-peptidylproline (omega=180) = [protein]-peptidylproline (omega=0). Its function is as follows. Involved in protein export. Acts as a chaperone by maintaining the newly synthesized protein in an open conformation. Functions as a peptidyl-prolyl cis-trans isomerase. The polypeptide is Trigger factor (Legionella pneumophila (strain Lens)).